Consider the following 1075-residue polypeptide: MPKRTDINTILIIGAGPIIIGQACEFDYSGAQAVKALREEGYKVILVNSNPATIMTDPDMADVTYIEPIQWQTLEKIIEKERPDAILPTMGGQTALNCALALSKNGVLKKYGVELIGATEDAIDKAEDRGRFKDAMTKIGLNTPKSFICHSFEEAWQAQEQVGFPTLIRPSFTMGGSGGGIAYNRDEFQAICERGFEASPTHELLIEQSVLGWKEYEMEVVRDKADNCIIVCSIENFDPMGVHTGDSITVAPAQTLTDKEYQIMRNASLAVLREIGVDTGGSNVQFAINPANGEMIVIEMNPRVSRSSALASKATGFPIAKVAAKLAVGYTLNELRNDITGGLIPTSFEPTIDYVVTKVPRFAFEKFPQADDRLTTQMKSVGEVMAMGRTFQESLQKALRGLEIGICGFNLRSESPETIRRELANPGPNRILYVADAFGAGFSLEEVHHYSKIDPWFLIQIQDLVQEEMALEKRAFTELDYAELRRLKRKGFSDKRIAQLIKVSESDVRAKRYALNLHPVYKRVDTCAGEFKADTAYLYSTYEDECEAKPTTRQKVMILGGGPNRIGQGIEFDYCCVHAALALREAGFETIMVNCNPETVSTDFDTSDRLYFEPLTLEDVLEIIYKEQPWGVIVHYGGQTPLKLAHALEQNGVNIIGTSADSIDAAEDRARFQKILTDLGLKQPNNRTARNAEEAVKLAEEVGYPLVVRPSYVLGGRAMQIVYNVDELNNYMQEAVSVSNDSPILLDHFLKNAIEVDVDCICDSEQVLIGGIMQHVEQAGIHSGDSACSLPAYSLTNEVQGEIRRQTSAMAFALGVKGLMNVQFAVQNETIYVLEVNPRASRTVPFVSKATGNPLAKIAALVMAGKSLAEQNATTEIIPPYFSVKEAVFPFIKFPGVDTTLSPEMRSTGEVMGTGQSFAEAYYKAQLGAGERIPSTGKVFLSIADEDKPQIIRVAQYLQAEGYGLCATIGTAQYLRENGVGVQIINKVREGRPNIVDSIKNNEIAMIINTVNNLPESIKEAQEIRRNALKLHIPTYTTLAAAEAISEAVRHINKYDVNALQQLHLSSALANQITR.

The carboxyphosphate synthetic domain stretch occupies residues 1-403 (MPKRTDINTI…SLQKALRGLE (403 aa)). Arg-129, Arg-169, Gly-175, Gly-176, Gln-208, Val-210, Glu-215, Gly-241, Val-242, His-243, Gln-285, and Glu-299 together coordinate ATP. Residues 133 to 328 (KDAMTKIGLN…IAKVAAKLAV (196 aa)) form the ATP-grasp 1 domain. Gln-285, Glu-299, and Asn-301 together coordinate Mg(2+). Mn(2+)-binding residues include Gln-285, Glu-299, and Asn-301. The tract at residues 404-548 (IGICGFNLRS…YSTYEDECEA (145 aa)) is oligomerization domain. A carbamoyl phosphate synthetic domain region spans residues 549-930 (KPTTRQKVMI…AYYKAQLGAG (382 aa)). One can recognise an ATP-grasp 2 domain in the interval 673-864 (QKILTDLGLK…LAKIAALVMA (192 aa)). The ATP site is built by Arg-709, His-748, Leu-750, Glu-755, Gly-780, Ile-781, His-782, Ser-783, Gln-823, and Glu-835. Gln-823, Glu-835, and Asn-837 together coordinate Mg(2+). The Mn(2+) site is built by Gln-823, Glu-835, and Asn-837. Positions 931–1070 (ERIPSTGKVF…QQLHLSSALA (140 aa)) constitute an MGS-like domain. The interval 931-1075 (ERIPSTGKVF…SSALANQITR (145 aa)) is allosteric domain.

This sequence belongs to the CarB family. Composed of two chains; the small (or glutamine) chain promotes the hydrolysis of glutamine to ammonia, which is used by the large (or ammonia) chain to synthesize carbamoyl phosphate. Tetramer of heterodimers (alpha,beta)4. Mg(2+) serves as cofactor. The cofactor is Mn(2+).

The enzyme catalyses hydrogencarbonate + L-glutamine + 2 ATP + H2O = carbamoyl phosphate + L-glutamate + 2 ADP + phosphate + 2 H(+). It catalyses the reaction hydrogencarbonate + NH4(+) + 2 ATP = carbamoyl phosphate + 2 ADP + phosphate + 2 H(+). It functions in the pathway amino-acid biosynthesis; L-arginine biosynthesis; carbamoyl phosphate from bicarbonate: step 1/1. The protein operates within pyrimidine metabolism; UMP biosynthesis via de novo pathway; (S)-dihydroorotate from bicarbonate: step 1/3. In terms of biological role, large subunit of the glutamine-dependent carbamoyl phosphate synthetase (CPSase). CPSase catalyzes the formation of carbamoyl phosphate from the ammonia moiety of glutamine, carbonate, and phosphate donated by ATP, constituting the first step of 2 biosynthetic pathways, one leading to arginine and/or urea and the other to pyrimidine nucleotides. The large subunit (synthetase) binds the substrates ammonia (free or transferred from glutamine from the small subunit), hydrogencarbonate and ATP and carries out an ATP-coupled ligase reaction, activating hydrogencarbonate by forming carboxy phosphate which reacts with ammonia to form carbamoyl phosphate. The polypeptide is Carbamoyl phosphate synthase large chain (Haemophilus ducreyi (strain 35000HP / ATCC 700724)).